A 142-amino-acid chain; its full sequence is Transcriptional regulator MraZ (142 aa).

2 consecutive SpoVT-AbrB domains span residues 5-51 (ASSL…PRPV) and 77-120 (ASDV…DATK).

This sequence belongs to the MraZ family. Forms oligomers.

The protein localises to the cytoplasm. The protein resides in the nucleoid. The sequence is that of Transcriptional regulator MraZ from Janthinobacterium sp. (strain Marseille) (Minibacterium massiliensis).